The primary structure comprises 100 residues: Apolipoprotein C-II (100 aa).

A signal peptide spans 1 to 22 (MGSRFLLALFLVLLVLGCEVQA). Positions 66 to 74 (SVDEKLRDM) are lipid binding. Residues 78-100 (SSAAMTTYASIFTDQIFTLLKGE) form a lipoprotein lipase cofactor region.

This sequence belongs to the apolipoprotein C2 family. Post-translationally, proapolipoprotein C-II is synthesized as a sialic acid containing glycoprotein which is subsequently desialylated prior to its proteolytic processing. In terms of processing, proapolipoprotein C-II, the major form found in plasma undergoes proteolytic cleavage of its N-terminal hexapeptide to generate the mature form apolipoprotein C-II, which occurs as the minor form in plasma.

The protein localises to the secreted. Functionally, component of chylomicrons, very low-density lipoproteins (VLDL), low-density lipoproteins (LDL), and high-density lipoproteins (HDL) in plasma. Plays an important role in lipoprotein metabolism as an activator of lipoprotein lipase. The polypeptide is Apolipoprotein C-II (APOC2) (Bramus lutescens (Transcaucasian mole vole)).